We begin with the raw amino-acid sequence, 372 residues long: Beta-1,3-N-acetylglucosaminyltransferase radical fringe (372 aa).

At 1 to 10 (MNSSCLGLRR) the chain is on the cytoplasmic side. Residues 11-27 (TCFLLSVTAAAVLLLLL) traverse the membrane as a helical; Signal-anchor for type II membrane protein segment. The Lumenal segment spans residues 28-372 (PRGQPPAAPR…TIWCPNKKMS (345 aa)). Positions 30 to 48 (GQPPAAPRRRPPPAGPSRP) are enriched in pro residues. The interval 30-96 (GQPPAAPRRR…RVRMGPPGGS (67 aa)) is disordered. Positions 64–78 (DRGGGSGAAGGGRGV) are enriched in gly residues. R120 lines the substrate pocket. A glycan (N-linked (GlcNAc...) asparagine) is linked at N159. Cystine bridges form between C160–C171 and C189–C253. D193 is a substrate binding site. Position 194 (D194) interacts with Mn(2+). Residue D283 is part of the active site. H307 contributes to the Mn(2+) binding site. Residues C357 and C366 are joined by a disulfide bond.

It belongs to the glycosyltransferase 31 family. Mn(2+) serves as cofactor.

The protein localises to the golgi apparatus membrane. The enzyme catalyses 3-O-(alpha-L-fucosyl)-L-threonyl-[EGF-like domain protein] + UDP-N-acetyl-alpha-D-glucosamine = 3-O-(N-acetyl-beta-D-glucosaminyl-(1-&gt;3)-alpha-L-fucosyl)-L-threonyl-[EGF-like domain protein] + UDP + H(+). It carries out the reaction 3-O-(alpha-L-fucosyl)-L-seryl-[EGF-like domain protein] + UDP-N-acetyl-alpha-D-glucosamine = 3-O-(N-acetyl-beta-D-glucosaminyl-(1-&gt;3)-alpha-L-fucosyl)-L-seryl-[EGF-like domain protein] + UDP + H(+). Its function is as follows. Glycosyltransferase that initiates the elongation of O-linked fucose residues attached to EGF-like repeats in the extracellular domain of Notch molecules. Plays an important role in limb outgrowth, it directs the formation and positioning of the apical ectodermal ridge (AER), one of the key organizer centers of vertebrate limb development. This is Beta-1,3-N-acetylglucosaminyltransferase radical fringe (RFNG) from Gallus gallus (Chicken).